The chain runs to 478 residues: Cytochrome c-552 (478 aa).

A signal peptide spans 1-26 (MARKTLRARRFFSLIFPFFFMTSVYA). His94 contributes to the heme c binding site. Cys122, Cys125, and Lys126 together coordinate heme. Heme c-binding residues include Cys160, Cys163, His164, Cys209, Cys212, and His213. Ca(2+) is bound by residues Glu215, Tyr216, Lys261, and Gln263. Residue Tyr216 coordinates substrate. Position 264 (His264) interacts with substrate. Residues His275, Cys282, Cys285, His286, His301, Cys314, Cys317, His318, and His393 each coordinate heme c.

It belongs to the cytochrome c-552 family. The cofactor is Ca(2+). Heme c is required as a cofactor.

Its subcellular location is the periplasm. It carries out the reaction 6 Fe(III)-[cytochrome c] + NH4(+) + 2 H2O = 6 Fe(II)-[cytochrome c] + nitrite + 8 H(+). The protein operates within nitrogen metabolism; nitrate reduction (assimilation). Its function is as follows. Catalyzes the reduction of nitrite to ammonia, consuming six electrons in the process. The protein is Cytochrome c-552 of Salmonella arizonae (strain ATCC BAA-731 / CDC346-86 / RSK2980).